A 379-amino-acid polypeptide reads, in one-letter code: Dual-specificity RNA methyltransferase RlmN (379 aa).

Catalysis depends on glutamate 95, which acts as the Proton acceptor. One can recognise a Radical SAM core domain in the interval 101-345 (EETRGTLCVS…TTVRKTRGDD (245 aa)). Cysteine 108 and cysteine 350 are disulfide-bonded. [4Fe-4S] cluster-binding residues include cysteine 115, cysteine 119, and cysteine 122. S-adenosyl-L-methionine is bound by residues 176-177 (GE), serine 208, 230-232 (SLH), and asparagine 307. Cysteine 350 serves as the catalytic S-methylcysteine intermediate.

The protein belongs to the radical SAM superfamily. RlmN family. [4Fe-4S] cluster serves as cofactor.

It is found in the cytoplasm. It carries out the reaction adenosine(2503) in 23S rRNA + 2 reduced [2Fe-2S]-[ferredoxin] + 2 S-adenosyl-L-methionine = 2-methyladenosine(2503) in 23S rRNA + 5'-deoxyadenosine + L-methionine + 2 oxidized [2Fe-2S]-[ferredoxin] + S-adenosyl-L-homocysteine. The catalysed reaction is adenosine(37) in tRNA + 2 reduced [2Fe-2S]-[ferredoxin] + 2 S-adenosyl-L-methionine = 2-methyladenosine(37) in tRNA + 5'-deoxyadenosine + L-methionine + 2 oxidized [2Fe-2S]-[ferredoxin] + S-adenosyl-L-homocysteine. Functionally, specifically methylates position 2 of adenine 2503 in 23S rRNA and position 2 of adenine 37 in tRNAs. m2A2503 modification seems to play a crucial role in the proofreading step occurring at the peptidyl transferase center and thus would serve to optimize ribosomal fidelity. The sequence is that of Dual-specificity RNA methyltransferase RlmN from Burkholderia cenocepacia (strain HI2424).